A 170-amino-acid polypeptide reads, in one-letter code: Adenine phosphoribosyltransferase (170 aa).

Belongs to the purine/pyrimidine phosphoribosyltransferase family. As to quaternary structure, homodimer.

The protein localises to the cytoplasm. It carries out the reaction AMP + diphosphate = 5-phospho-alpha-D-ribose 1-diphosphate + adenine. It functions in the pathway purine metabolism; AMP biosynthesis via salvage pathway; AMP from adenine: step 1/1. In terms of biological role, catalyzes a salvage reaction resulting in the formation of AMP, that is energically less costly than de novo synthesis. The polypeptide is Adenine phosphoribosyltransferase (Symbiobacterium thermophilum (strain DSM 24528 / JCM 14929 / IAM 14863 / T)).